The sequence spans 187 residues: Calcium and integrin-binding family member 2 (187 aa).

3 EF-hand domains span residues 66–101 (RENP…LCES), 103–138 (PREL…LTKS), and 144–179 (EVVL…APDF). Ca(2+) is bound by residues D116, N118, D120, D127, D157, D159, D161, K163, and D168.

Monomer. Homodimer. Interacts with WHRN and MYO7A. Interacts with ITGA2B (via C-terminus cytoplasmic tail region); the interactions are stabilized/increased in a calcium and magnesium-dependent manner. Interacts with ITGA7 (via C-terminus cytoplasmic tail region); the interactions are stabilized/increased in a calcium and magnesium-dependent manner. Interacts with TMC1. Interacts with TMC2. As to expression, widely expressed.

The protein resides in the cytoplasm. It localises to the cell projection. It is found in the stereocilium. Its subcellular location is the photoreceptor inner segment. The protein localises to the cilium. The protein resides in the photoreceptor outer segment. It localises to the cell membrane. It is found in the sarcolemma. Calcium- and integrin-binding protein that plays a role in intracellular calcium homeostasis. Acts as an auxiliary subunit of the sensory mechanoelectrical transduction (MET) channel in hair cells. Essential for mechanoelectrical transduction (MET) currents in auditory hair cells and thereby required for hearing. Regulates the function of hair cell mechanotransduction by controlling the distribution of transmembrane channel-like proteins TMC1 and TMC2, and by regulating the function of the MET channels in hair cells. Required for the maintenance of auditory hair cell stereocilia bundle morphology and function and for hair-cell survival in the cochlea. Critical for proper photoreceptor cell maintenance and function. Plays a role in intracellular calcium homeostasis by decreasing ATP-induced calcium release. The polypeptide is Calcium and integrin-binding family member 2 (CIB2) (Homo sapiens (Human)).